Here is a 240-residue protein sequence, read N- to C-terminus: Methylthioribulose-1-phosphate dehydratase (240 aa).

Substrate is bound at residue Cys103. Positions 121 and 123 each coordinate Zn(2+). The active-site Proton donor/acceptor is the Glu144. Position 200 (His200) interacts with Zn(2+).

This sequence belongs to the aldolase class II family. MtnB subfamily. It depends on Zn(2+) as a cofactor.

It is found in the cytoplasm. The enzyme catalyses 5-(methylsulfanyl)-D-ribulose 1-phosphate = 5-methylsulfanyl-2,3-dioxopentyl phosphate + H2O. Its pathway is amino-acid biosynthesis; L-methionine biosynthesis via salvage pathway; L-methionine from S-methyl-5-thio-alpha-D-ribose 1-phosphate: step 2/6. Its function is as follows. Catalyzes the dehydration of methylthioribulose-1-phosphate (MTRu-1-P) into 2,3-diketo-5-methylthiopentyl-1-phosphate (DK-MTP-1-P). In Komagataella phaffii (strain GS115 / ATCC 20864) (Yeast), this protein is Methylthioribulose-1-phosphate dehydratase.